The following is a 616-amino-acid chain: Origin recognition complex subunit 3 (616 aa).

Ser-2 carries the N-acetylserine modification.

Belongs to the ORC3 family. Component of the origin recognition complex (ORC) composed of at least ORC1, ORC2, ORC3, ORC4, ORC5 and ORC6. Interacts with ORC6.

The protein resides in the nucleus. Functionally, component of the origin recognition complex (ORC) that binds origins of replication. It has a role in both chromosomal replication and mating type transcriptional silencing. Binds to the ARS consensus sequence (ACS) of origins of replication. The chain is Origin recognition complex subunit 3 (ORC3) from Saccharomyces cerevisiae (strain ATCC 204508 / S288c) (Baker's yeast).